Here is a 212-residue protein sequence, read N- to C-terminus: Glycerol-3-phosphate acyltransferase (212 aa).

The next 6 membrane-spanning stretches (helical) occupy residues I6–L26, L56–H76, L92–F112, L122–L142, S150–A170, and S171–W191.

The protein belongs to the PlsY family. As to quaternary structure, probably interacts with PlsX.

Its subcellular location is the cell inner membrane. It catalyses the reaction an acyl phosphate + sn-glycerol 3-phosphate = a 1-acyl-sn-glycero-3-phosphate + phosphate. It participates in lipid metabolism; phospholipid metabolism. Its function is as follows. Catalyzes the transfer of an acyl group from acyl-phosphate (acyl-PO(4)) to glycerol-3-phosphate (G3P) to form lysophosphatidic acid (LPA). This enzyme utilizes acyl-phosphate as fatty acyl donor, but not acyl-CoA or acyl-ACP. The protein is Glycerol-3-phosphate acyltransferase of Zymomonas mobilis subsp. mobilis (strain ATCC 31821 / ZM4 / CP4).